A 637-amino-acid chain; its full sequence is DNA gyrase subunit B (637 aa).

Residues 420 to 534 (CEIYIVEGDS…EGHVFIAQPP (115 aa)) form the Toprim domain. Residues Glu-426, Asp-499, and Asp-501 each coordinate Mg(2+).

This sequence belongs to the type II topoisomerase GyrB family. In terms of assembly, heterotetramer, composed of two GyrA and two GyrB chains. In the heterotetramer, GyrA contains the active site tyrosine that forms a transient covalent intermediate with DNA, while GyrB binds cofactors and catalyzes ATP hydrolysis. The cofactor is Mg(2+). Requires Mn(2+) as cofactor. It depends on Ca(2+) as a cofactor.

The protein localises to the cytoplasm. The enzyme catalyses ATP-dependent breakage, passage and rejoining of double-stranded DNA.. Functionally, a type II topoisomerase that negatively supercoils closed circular double-stranded (ds) DNA in an ATP-dependent manner to modulate DNA topology and maintain chromosomes in an underwound state. Negative supercoiling favors strand separation, and DNA replication, transcription, recombination and repair, all of which involve strand separation. Also able to catalyze the interconversion of other topological isomers of dsDNA rings, including catenanes and knotted rings. Type II topoisomerases break and join 2 DNA strands simultaneously in an ATP-dependent manner. The chain is DNA gyrase subunit B from Clostridium acetobutylicum (strain ATCC 824 / DSM 792 / JCM 1419 / IAM 19013 / LMG 5710 / NBRC 13948 / NRRL B-527 / VKM B-1787 / 2291 / W).